We begin with the raw amino-acid sequence, 668 residues long: UvrABC system protein B (668 aa).

The region spanning 31–416 (QGITDGVPAQ…RGHIIEQIIR (386 aa)) is the Helicase ATP-binding domain. 44–51 (GTTGSGKT) contacts ATP. The short motif at 97 to 120 (YYDYYQPEAYIARSDTYIEKSLLI) is the Beta-hairpin element. Residues 433 to 596 (QIDDLLEEIR…ITPQPIIKPI (164 aa)) enclose the Helicase C-terminal domain. In terms of domain architecture, UVR spans 621-656 (EASIKTYEEAMYQAAQEFQFDEAAKYRDLMNAAKKQ).

The protein belongs to the UvrB family. Forms a heterotetramer with UvrA during the search for lesions. Interacts with UvrC in an incision complex.

The protein localises to the cytoplasm. Its function is as follows. The UvrABC repair system catalyzes the recognition and processing of DNA lesions. A damage recognition complex composed of 2 UvrA and 2 UvrB subunits scans DNA for abnormalities. Upon binding of the UvrA(2)B(2) complex to a putative damaged site, the DNA wraps around one UvrB monomer. DNA wrap is dependent on ATP binding by UvrB and probably causes local melting of the DNA helix, facilitating insertion of UvrB beta-hairpin between the DNA strands. Then UvrB probes one DNA strand for the presence of a lesion. If a lesion is found the UvrA subunits dissociate and the UvrB-DNA preincision complex is formed. This complex is subsequently bound by UvrC and the second UvrB is released. If no lesion is found, the DNA wraps around the other UvrB subunit that will check the other stand for damage. This is UvrABC system protein B from Chlamydia trachomatis serovar D (strain ATCC VR-885 / DSM 19411 / UW-3/Cx).